Reading from the N-terminus, the 710-residue chain is Lactoperoxidase (710 aa).

Positions 1–23 are cleaved as a signal peptide; sequence MKVLLHLPALLASLTLLQTAASA. Positions 24-80 are excised as a propeptide; the sequence is SDDPTAETDIIHDTVEEVKVWVNKAFLDSRDRLKMAMTTKIHSTRHLSDYLKHAKGR. An intrachain disulfide couples cysteine 130 to cysteine 143. Aspartate 223 provides a ligand contact to heme b. Catalysis depends on histidine 224, which acts as the Proton acceptor. Residue aspartate 225 participates in Ca(2+) binding. 2 cysteine pairs are disulfide-bonded: cysteine 244–cysteine 254 and cysteine 248–cysteine 272. 4 residues coordinate Ca(2+): threonine 299, phenylalanine 301, aspartate 303, and serine 305. Serine 313 bears the Phosphoserine mark. Residues cysteine 352 and cysteine 363 are joined by a disulfide bond. 2 residues coordinate heme b: glutamate 373 and histidine 466. Residue tyrosine 480 is modified to 3'-nitrotyrosine. 2 disulfide bridges follow: cysteine 571–cysteine 628 and cysteine 669–cysteine 694.

The protein belongs to the peroxidase family. It depends on Ca(2+) as a cofactor. Heme b is required as a cofactor. In terms of tissue distribution, expressed in the colon, including colonocytes and mucin-containing goblet cells. Not detected in the ileum.

Its subcellular location is the secreted. It is found in the cytoplasm. The catalysed reaction is 2 a phenolic donor + H2O2 = 2 a phenolic radical donor + 2 H2O. It carries out the reaction thiocyanate + H2O2 + H(+) = hypothiocyanous acid + H2O. It catalyses the reaction iodide + H2O2 = hypoiodite + H2O. Functionally, heme-containing oxidoreductase which catalyzes the conversion of thiocyanate (SCN(-)) into antimicrobial agent hypothiocyanous acid (OSCN(-)) in the presence of hydrogen peroxide (H2O2). Also involved in the conversion of iodide (I(-)) into hypoiodite (IO(-)) in the presence of H2O2. Responsible for the inactivation of a wide range of micro-organisms and hence, important component of defense mechanism. May be implicated in airway host defense against infection. May contribute to maintaining an appropriate H2O2 cellular level, therefore protecting cells from H2O2-caused injuries and inflammation. The protein is Lactoperoxidase of Mus musculus (Mouse).